The sequence spans 136 residues: Protein NrdI (136 aa).

This sequence belongs to the NrdI family.

Probably involved in ribonucleotide reductase function. This Escherichia coli O127:H6 (strain E2348/69 / EPEC) protein is Protein NrdI.